Consider the following 265-residue polypeptide: WUSCHEL-related homeobox 3B (265 aa).

The homeobox; WUS-type DNA-binding region spans 4 to 68 (TPSTRWCPTP…NHKARERQRL (65 aa)). Disordered stretches follow at residues 77-107 (QQQY…APPA) and 242-265 (PTKS…TSTN). A compositionally biased stretch (low complexity) spans 254–265 (SSKSSSCSTSTN).

Belongs to the WUS homeobox family. Predominantly expressed in tissues enriched for shoot meristems and young lateral organ primordia. First expressed in lateral domains of shoot meristems. It is then expressed in the margins of young lateral organ primordia. Not expressed in roots, seedling leaves or fully expanded coleoptiles. Also expressed in vegetative shoot apices (five leaf primordia and the SAM) and in the male inflorescence. Expressed at high level in the female inflorescence.

It is found in the nucleus. Functionally, probable transcription factor required to initiate organ founder cells in a lateral domain of shoot meristems. Involved in leaf formation. This is WUSCHEL-related homeobox 3B (WOX3B) from Zea mays (Maize).